We begin with the raw amino-acid sequence, 154 residues long: 3-dehydroquinate dehydratase (154 aa).

Catalysis depends on tyrosine 23, which acts as the Proton acceptor. Positions 75, 81, and 88 each coordinate substrate. Residue histidine 101 is the Proton donor of the active site. Substrate is bound by residues 102–103 and arginine 112; that span reads LS.

The protein belongs to the type-II 3-dehydroquinase family. Homododecamer.

The enzyme catalyses 3-dehydroquinate = 3-dehydroshikimate + H2O. The protein operates within metabolic intermediate biosynthesis; chorismate biosynthesis; chorismate from D-erythrose 4-phosphate and phosphoenolpyruvate: step 3/7. Its function is as follows. Catalyzes a trans-dehydration via an enolate intermediate. This Teredinibacter turnerae (strain ATCC 39867 / T7901) protein is 3-dehydroquinate dehydratase.